A 210-amino-acid polypeptide reads, in one-letter code: NADH dehydrogenase [ubiquinone] iron-sulfur protein 8, mitochondrial (210 aa).

The transit peptide at Met-1–Ala-34 directs the protein to the mitochondrion. 4Fe-4S ferredoxin-type domains lie at Arg-102–Glu-131 and Thr-141–Asn-170. [4Fe-4S] cluster is bound by residues Cys-111, Cys-114, Cys-117, Cys-121, Cys-150, Cys-153, Cys-156, and Cys-160.

It belongs to the complex I 23 kDa subunit family. Core subunit of respiratory chain NADH dehydrogenase (Complex I) which is composed of 45 different subunits. This is a component of the iron-sulfur (IP) fragment of the enzyme. Interacts with RAB5IF. It depends on [4Fe-4S] cluster as a cofactor.

The protein resides in the mitochondrion inner membrane. It catalyses the reaction a ubiquinone + NADH + 5 H(+)(in) = a ubiquinol + NAD(+) + 4 H(+)(out). Its function is as follows. Core subunit of the mitochondrial membrane respiratory chain NADH dehydrogenase (Complex I) which catalyzes electron transfer from NADH through the respiratory chain, using ubiquinone as an electron acceptor. Essential for the catalytic activity and assembly of complex I. The polypeptide is NADH dehydrogenase [ubiquinone] iron-sulfur protein 8, mitochondrial (NDUFS8) (Macaca fascicularis (Crab-eating macaque)).